Consider the following 216-residue polypeptide: Pathogenicity-related ORF2 (216 aa).

The next 4 membrane-spanning stretches (helical) occupy residues 6 to 26 (VGSL…AAMV), 55 to 75 (LNGV…MEAF), 157 to 177 (IGFL…NALM), and 193 to 213 (FKLL…GLVL).

The protein belongs to the FliP/MopC/SpaP family.

Its subcellular location is the cell membrane. In terms of biological role, important for pathogenicity. This chain is Pathogenicity-related ORF2, found in Xanthomonas campestris pv. glycines.